The primary structure comprises 280 residues: Putative ABC transporter ATP-binding protein MTH_133 (280 aa).

The region spanning 6-241 is the ABC transporter domain; the sequence is IEAVDIRYTY…IDTIRGANLR (236 aa). ATP is bound at residue 39–46; it reads GPNGAGKS.

This sequence belongs to the ABC transporter superfamily.

The protein resides in the cell membrane. In terms of biological role, probably part of an ABC transporter complex. Responsible for energy coupling to the transport system. This chain is Putative ABC transporter ATP-binding protein MTH_133, found in Methanothermobacter thermautotrophicus (strain ATCC 29096 / DSM 1053 / JCM 10044 / NBRC 100330 / Delta H) (Methanobacterium thermoautotrophicum).